The following is a 193-amino-acid chain: Pyridoxal 5'-phosphate synthase subunit PdxT (193 aa).

Residue 52-54 (GES) participates in L-glutamine binding. The active-site Nucleophile is the C84. L-glutamine contacts are provided by residues R111 and 139–140 (IR). Residues H176 and E178 each act as charge relay system in the active site.

The protein belongs to the glutaminase PdxT/SNO family. In the presence of PdxS, forms a dodecamer of heterodimers. Only shows activity in the heterodimer.

The catalysed reaction is aldehydo-D-ribose 5-phosphate + D-glyceraldehyde 3-phosphate + L-glutamine = pyridoxal 5'-phosphate + L-glutamate + phosphate + 3 H2O + H(+). It catalyses the reaction L-glutamine + H2O = L-glutamate + NH4(+). It functions in the pathway cofactor biosynthesis; pyridoxal 5'-phosphate biosynthesis. Functionally, catalyzes the hydrolysis of glutamine to glutamate and ammonia as part of the biosynthesis of pyridoxal 5'-phosphate. The resulting ammonia molecule is channeled to the active site of PdxS. This is Pyridoxal 5'-phosphate synthase subunit PdxT from Pasteurella multocida (strain Pm70).